A 118-amino-acid polypeptide reads, in one-letter code: Holo-[acyl-carrier-protein] synthase (118 aa).

Residues D8 and E58 each contribute to the Mg(2+) site.

Belongs to the P-Pant transferase superfamily. AcpS family. Mg(2+) is required as a cofactor.

The protein localises to the cytoplasm. The enzyme catalyses apo-[ACP] + CoA = holo-[ACP] + adenosine 3',5'-bisphosphate + H(+). Functionally, transfers the 4'-phosphopantetheine moiety from coenzyme A to a Ser of acyl-carrier-protein. The protein is Holo-[acyl-carrier-protein] synthase of Listeria welshimeri serovar 6b (strain ATCC 35897 / DSM 20650 / CCUG 15529 / CIP 8149 / NCTC 11857 / SLCC 5334 / V8).